A 172-amino-acid polypeptide reads, in one-letter code: ATP synthase subunit b (172 aa).

Residues 17–37 (IVFSAIVLAIVLPFFWWFVIP) traverse the membrane as a helical segment.

This sequence belongs to the ATPase B chain family. As to quaternary structure, F-type ATPases have 2 components, F(1) - the catalytic core - and F(0) - the membrane proton channel. F(1) has five subunits: alpha(3), beta(3), gamma(1), delta(1), epsilon(1). F(0) has three main subunits: a(1), b(2) and c(10-14). The alpha and beta chains form an alternating ring which encloses part of the gamma chain. F(1) is attached to F(0) by a central stalk formed by the gamma and epsilon chains, while a peripheral stalk is formed by the delta and b chains.

The protein resides in the cell membrane. Functionally, f(1)F(0) ATP synthase produces ATP from ADP in the presence of a proton or sodium gradient. F-type ATPases consist of two structural domains, F(1) containing the extramembraneous catalytic core and F(0) containing the membrane proton channel, linked together by a central stalk and a peripheral stalk. During catalysis, ATP synthesis in the catalytic domain of F(1) is coupled via a rotary mechanism of the central stalk subunits to proton translocation. Component of the F(0) channel, it forms part of the peripheral stalk, linking F(1) to F(0). This is ATP synthase subunit b from Tropheryma whipplei (strain TW08/27) (Whipple's bacillus).